Consider the following 132-residue polypeptide: Large ribosomal subunit protein uL14 (132 aa).

The protein belongs to the universal ribosomal protein uL14 family. In terms of assembly, part of the 50S ribosomal subunit. Forms a cluster with proteins L3 and L24e, part of which may contact the 16S rRNA in 2 intersubunit bridges.

In terms of biological role, binds to 23S rRNA. Forms part of two intersubunit bridges in the 70S ribosome. The sequence is that of Large ribosomal subunit protein uL14 from Picrophilus torridus (strain ATCC 700027 / DSM 9790 / JCM 10055 / NBRC 100828 / KAW 2/3).